Consider the following 319-residue polypeptide: Guanosine ABC transporter permease protein NupQ (319 aa).

9 helical membrane passes run 6-26 (ILSI…LTAL), 39-59 (IGLE…NLFF), 65-85 (AAAP…FSLI), 99-119 (VSGV…VKLI), 159-179 (ILAI…PFGL), 204-224 (IGVM…ASTI), 235-255 (GQGF…IGAL), 257-277 (AALF…LPLF), and 282-302 (NVYM…GFIG).

The protein belongs to the binding-protein-dependent transport system permease family. In terms of assembly, the complex is composed of two ATP-binding proteins (NupO), two transmembrane proteins (NupP and NupQ) and a solute-binding protein (NupN).

It is found in the cell membrane. In terms of biological role, part of an ABC transporter complex involved in the uptake of guanosine. Responsible for the translocation of the substrate across the membrane. May be a nucleoside transporter of broad specificity but with various affinities for different substrates. This chain is Guanosine ABC transporter permease protein NupQ, found in Bacillus subtilis (strain 168).